The sequence spans 406 residues: Cysteine desulfurase (406 aa).

K226 is modified (N6-(pyridoxal phosphate)lysine). The Cysteine persulfide intermediate role is filled by C364.

Belongs to the class-V pyridoxal-phosphate-dependent aminotransferase family. Csd subfamily. Homodimer. Interacts with SufE and the SufBCD complex composed of SufB, SufC and SufD. The interaction with SufE is required to mediate the direct transfer of the sulfur atom from the S-sulfanylcysteine. Pyridoxal 5'-phosphate serves as cofactor.

It is found in the cytoplasm. The enzyme catalyses (sulfur carrier)-H + L-cysteine = (sulfur carrier)-SH + L-alanine. It catalyses the reaction L-selenocysteine + AH2 = hydrogenselenide + L-alanine + A + H(+). It participates in cofactor biosynthesis; iron-sulfur cluster biosynthesis. In terms of biological role, cysteine desulfurases mobilize the sulfur from L-cysteine to yield L-alanine, an essential step in sulfur metabolism for biosynthesis of a variety of sulfur-containing biomolecules. Component of the suf operon, which is activated and required under specific conditions such as oxidative stress and iron limitation. Acts as a potent selenocysteine lyase in vitro, that mobilizes selenium from L-selenocysteine. Selenocysteine lyase activity is however unsure in vivo. This chain is Cysteine desulfurase, found in Escherichia fergusonii (strain ATCC 35469 / DSM 13698 / CCUG 18766 / IAM 14443 / JCM 21226 / LMG 7866 / NBRC 102419 / NCTC 12128 / CDC 0568-73).